Reading from the N-terminus, the 164-residue chain is Lipoprotein signal peptidase (164 aa).

The next 4 membrane-spanning stretches (helical) occupy residues 6–26 (LGILTAVIALALDQATKLWLL), 39–59 (VTSFFDLVLAWNTGISYGWFA), 65–85 (GQILMLAFKAVAIVALAIWMA), and 88–108 (TTKLATIGLGLIIGGAIGNAI). Catalysis depends on residues Asp-118 and Asp-140. A helical membrane pass occupies residues 141–161 (VAIVVGVVALLYDSLIGAPAV).

Belongs to the peptidase A8 family.

Its subcellular location is the cell inner membrane. It catalyses the reaction Release of signal peptides from bacterial membrane prolipoproteins. Hydrolyzes -Xaa-Yaa-Zaa-|-(S,diacylglyceryl)Cys-, in which Xaa is hydrophobic (preferably Leu), and Yaa (Ala or Ser) and Zaa (Gly or Ala) have small, neutral side chains.. It functions in the pathway protein modification; lipoprotein biosynthesis (signal peptide cleavage). In terms of biological role, this protein specifically catalyzes the removal of signal peptides from prolipoproteins. This chain is Lipoprotein signal peptidase, found in Rhodopseudomonas palustris (strain TIE-1).